A 361-amino-acid chain; its full sequence is tRNA N6-adenosine threonylcarbamoyltransferase (361 aa).

Positions 110 and 114 each coordinate Fe cation. Substrate-binding positions include 132–136 (LVSGG), aspartate 165, glycine 178, aspartate 182, and asparagine 289. Aspartate 317 is a Fe cation binding site.

This sequence belongs to the KAE1 / TsaD family. Requires Fe(2+) as cofactor.

It is found in the cytoplasm. It catalyses the reaction L-threonylcarbamoyladenylate + adenosine(37) in tRNA = N(6)-L-threonylcarbamoyladenosine(37) in tRNA + AMP + H(+). Its function is as follows. Required for the formation of a threonylcarbamoyl group on adenosine at position 37 (t(6)A37) in tRNAs that read codons beginning with adenine. Is involved in the transfer of the threonylcarbamoyl moiety of threonylcarbamoyl-AMP (TC-AMP) to the N6 group of A37, together with TsaE and TsaB. TsaD likely plays a direct catalytic role in this reaction. The polypeptide is tRNA N6-adenosine threonylcarbamoyltransferase (Nitratidesulfovibrio vulgaris (strain ATCC 29579 / DSM 644 / CCUG 34227 / NCIMB 8303 / VKM B-1760 / Hildenborough) (Desulfovibrio vulgaris)).